The chain runs to 93 residues: Large ribosomal subunit protein uL23 (93 aa).

This sequence belongs to the universal ribosomal protein uL23 family. Part of the 50S ribosomal subunit. Contacts protein L29, and trigger factor when it is bound to the ribosome.

Its function is as follows. One of the early assembly proteins it binds 23S rRNA. One of the proteins that surrounds the polypeptide exit tunnel on the outside of the ribosome. Forms the main docking site for trigger factor binding to the ribosome. The sequence is that of Large ribosomal subunit protein uL23 from Helicobacter acinonychis (strain Sheeba).